Consider the following 493-residue polypeptide: Aminotransferase swnA (493 aa).

Belongs to the class-I pyridoxal-phosphate-dependent aminotransferase family. Pyridoxal 5'-phosphate serves as cofactor.

Its pathway is mycotoxin biosynthesis. Its function is as follows. Aminotransferase; part of the gene cluster that mediates the biosynthesis of swainsonine (SW), a cytotoxic fungal alkaloid and a potential cancer therapy drug. Swainsonine production occurs via a multibranched pathway and is dispensable for fungal colonization of plants and infection of insect hosts. The first step of swainsonine biosynthesis is the production of the precursor pipecolic acid (PA) via conversion of L-lysine (Lys) to 1-piperideine-6-carboxylate (P6C) by the aminotransferase swnA, the latter being further reduced to PA by the reductase swnR. The PKS-NRPS hybrid synthetase swnK uptakes and condensates PA and malonyl-CoA with and without skipping of the ketoreductase (KR) domain in order to produce 3 intermediates, 1-oxoindolizidine, (1S)-1-hydroxyindolizin, and (1R)-1-hydroxyindolizine; with the transisomer (1S)-1-hydroxyindolizin being predominant. The terminal thioester reductase (TE) domain of swnK is involved in reduction of the thioester bond to release the intermediate aldehydes. The oxidoreductase swnN could contribute to the reduction of 1-oxoindolizidine to (1S)-1-hydroxyindolizin and (1R)-1-hydroxyindolizine, contributing to the major route of SW production. The dioxygenase swnH2 would be responsible for the oxidization of (1R)-1-hydroxyindolizine into (1R,2S)-1,2-dihydroxyindolizine and of (1S)-1-hydroxyindolizin to yield both (1R,2S)-1,2-dihydroxyindolizine and (1S,2S)-1,2-dihydroxyindolizine. The dioxygenase swnH1 then performs the conversion of the 1,2-dihydroxyindolizine epimers to SW. In Arthroderma benhamiae (strain ATCC MYA-4681 / CBS 112371) (Trichophyton mentagrophytes), this protein is Aminotransferase swnA.